The following is a 147-amino-acid chain: MVHLTGEEKSAVTTLWGKVNVDEVGGEALGRLLVVYPWTQRFFESFGDLSSPDAVMGNPKVKAHGKKVLGAFSDGLAHLDNLKGTFAQLSELHCDKLHVDPENFRLLGNVLVCVLAHHFGKEFTPQLQAAYQKVVAGVANALAHKYH.

Valine 2 is subject to N-acetylvaline. Residues 3 to 147 (HLTGEEKSAV…VANALAHKYH (145 aa)) enclose the Globin domain. A Phosphothreonine modification is found at threonine 13. At serine 45 the chain carries Phosphoserine. An N6-acetyllysine modification is found at lysine 60. Position 64 (histidine 64) interacts with heme b. N6-acetyllysine is present on lysine 83. Position 93 (histidine 93) interacts with heme b. At cysteine 94 the chain carries S-nitrosocysteine. An N6-acetyllysine modification is found at lysine 145.

The protein belongs to the globin family. Heterotetramer of two alpha chains and two beta chains. Red blood cells.

Involved in oxygen transport from the lung to the various peripheral tissues. The sequence is that of Hemoglobin subunit beta (HBB) from Ateles paniscus (Black spider monkey).